The sequence spans 114 residues: Non-specific lipid-transfer protein 1 (114 aa).

Positions 1-23 (MEIAGKIACFVVLCMVVAAPCAE) are cleaved as a signal peptide. 4 disulfides stabilise this stretch: C27–C73, C37–C50, C51–C96, and C71–C110.

Belongs to the plant LTP family. As to expression, high expression in leaf epidermis and shoot apex, and also in root epidermis during seedling germination.

Functionally, plant non-specific lipid-transfer proteins transfer phospholipids as well as galactolipids across membranes. Binds cis-unsaturated fatty acids and jasmonic acid with a higher affinity than linear chain fatty acids. Formation of the complex with jasmonic acid results in a conformational change facilitating the LPT1 binding on the elicitin plasma membrane receptor that is known to be involved in plant defense induction. May also play a role in wax or cutin deposition in the cell walls of expanding epidermal cells and certain secretory tissues. This chain is Non-specific lipid-transfer protein 1 (LTP1), found in Nicotiana tabacum (Common tobacco).